The following is a 745-amino-acid chain: Centromere protein I (745 aa).

Polar residues predominate over residues 1 to 27; that stretch reads MATPRLTRNSQQQNRISQGSNSRQTTL. The interval 1–58 is disordered; sequence MATPRLTRNSQQQNRISQGSNSRQTTLLDWKVKDKAGNSKSVLEESSSLEDSNHADDQ. The span at 39–50 shows a compositional bias: low complexity; sequence SKSVLEESSSLE.

Belongs to the CENP-I/CTF3 family. In terms of assembly, component of the CENPA-CAD complex, composed of CENPI, CENPK, CENPL, CENPO, CENPP, CENPQ, CENPR and CENPS. The CENPA-CAD complex interacts with the CENPA-NAC complex, at least composed of CENPA, CENPC, CENPH, CENPM, CENPN, CENPT and CENPU. Interacts with SENP6. Post-translationally, sumoylated. Sumoylated form can be polyubiquitinated by RNF4, leading to its degradation. Desumoylation by SENP6 prevents its degradation. In terms of tissue distribution, highly expressed in testis, ovary and spleen. A much lower mRNA level is found in brain and lung, and no expression is detected in liver, kidney, heart, muscle, pituitary gland, prostate, epididymis and seminal vesicle.

Its subcellular location is the nucleus. It is found in the chromosome. The protein localises to the centromere. Functionally, component of the CENPA-CAD (nucleosome distal) complex, a complex recruited to centromeres which is involved in assembly of kinetochore proteins, mitotic progression and chromosome segregation. May be involved in incorporation of newly synthesized CENPA into centromeres via its interaction with the CENPA-NAC complex. Required for the localization of CENPF, MAD1L1 and MAD2 (MAD2L1 or MAD2L2) to kinetochores. Involved in the response of gonadal tissues to follicle-stimulating hormone. This is Centromere protein I (Cenpi) from Rattus norvegicus (Rat).